The sequence spans 215 residues: Probable transaldolase 1 (215 aa).

The active-site Schiff-base intermediate with substrate is Lys-83.

This sequence belongs to the transaldolase family. Type 3B subfamily.

The protein resides in the cytoplasm. The catalysed reaction is D-sedoheptulose 7-phosphate + D-glyceraldehyde 3-phosphate = D-erythrose 4-phosphate + beta-D-fructose 6-phosphate. It functions in the pathway carbohydrate degradation; pentose phosphate pathway; D-glyceraldehyde 3-phosphate and beta-D-fructose 6-phosphate from D-ribose 5-phosphate and D-xylulose 5-phosphate (non-oxidative stage): step 2/3. Functionally, transaldolase is important for the balance of metabolites in the pentose-phosphate pathway. This is Probable transaldolase 1 from Bacillus cereus (strain ATCC 14579 / DSM 31 / CCUG 7414 / JCM 2152 / NBRC 15305 / NCIMB 9373 / NCTC 2599 / NRRL B-3711).